We begin with the raw amino-acid sequence, 86 residues long: MAWELKKGGENYIFVYVSGGYVILGSRDRTIQSSAEYCSIEDFIIKGQLQQPIVQEFGEKTFKEIYDKVARVHQQRNQKTTAPQSS.

This is an uncharacterized protein from Dictyostelium discoideum (Social amoeba).